We begin with the raw amino-acid sequence, 377 residues long: tRNA-specific 2-thiouridylase MnmA (377 aa).

ATP-binding positions include 12-19 (GMSGGVDS) and M38. Positions 98 to 100 (NPD) are interaction with target base in tRNA. C103 acts as the Nucleophile in catalysis. An intrachain disulfide couples C103 to C200. G127 lines the ATP pocket. Positions 150-152 (KDQ) are interaction with tRNA. C200 serves as the catalytic Cysteine persulfide intermediate. The tract at residues 313–314 (RY) is interaction with tRNA.

This sequence belongs to the MnmA/TRMU family.

The protein localises to the cytoplasm. The catalysed reaction is S-sulfanyl-L-cysteinyl-[protein] + uridine(34) in tRNA + AH2 + ATP = 2-thiouridine(34) in tRNA + L-cysteinyl-[protein] + A + AMP + diphosphate + H(+). Its function is as follows. Catalyzes the 2-thiolation of uridine at the wobble position (U34) of tRNA, leading to the formation of s(2)U34. The sequence is that of tRNA-specific 2-thiouridylase MnmA from Pediococcus pentosaceus (strain ATCC 25745 / CCUG 21536 / LMG 10740 / 183-1w).